Here is a 192-residue protein sequence, read N- to C-terminus: Signal peptidase complex catalytic subunit sec11 (192 aa).

The Cytoplasmic segment spans residues 1–18; sequence MLSFLSSNLSSTRQSLAQ. The helical; Signal-anchor for type II membrane protein transmembrane segment at 19–39 threads the bilayer; it reads VLNFALVLSTAFMLWKGLSVF. Over 40–192 the chain is Lumenal; it reads TASSSPIVVV…GLMVILQREQ (153 aa). Residues Ser-53, His-92, and Asp-133 each act as charge relay system in the active site. The interval 177–188 is C-terminal short (CTS) helix; it reads VLLGIMGLMVIL.

Belongs to the peptidase S26B family. As to quaternary structure, component of the signal peptidase complex (SPC) composed of a catalytic subunit SEC11 and three accessory subunits SPC1, SPC2 and SPC3. The complex induces a local thinning of the ER membrane which is used to measure the length of the signal peptide (SP) h-region of protein substrates. This ensures the selectivity of the complex towards h-regions shorter than 18-20 amino acids. SPC associates with the translocon complex.

It localises to the endoplasmic reticulum membrane. The enzyme catalyses Cleavage of hydrophobic, N-terminal signal or leader sequences from secreted and periplasmic proteins.. Its function is as follows. Catalytic component of the signal peptidase complex (SPC) which catalyzes the cleavage of N-terminal signal sequences from nascent proteins as they are translocated into the lumen of the endoplasmic reticulum. Specifically cleaves N-terminal signal peptides that contain a hydrophobic alpha-helix (h-region) shorter than 18-20 amino acids. This chain is Signal peptidase complex catalytic subunit sec11 (sec11), found in Neosartorya fischeri (strain ATCC 1020 / DSM 3700 / CBS 544.65 / FGSC A1164 / JCM 1740 / NRRL 181 / WB 181) (Aspergillus fischerianus).